Here is a 316-residue protein sequence, read N- to C-terminus: MTKEFHHVTVLLHETIDMLDVKPDGIYVDATLGGAGHSEYLLSKLSEKGHLYAFDQDQNAIDNAQKRLAPYIEKGMVTFIKDNFRHLQARLREAGVQEIDGICYDLGVSSPQLDQRERGFSYKKDAPLDMRMNQDASLTAYEVVNNYDYHDLVRIFFKYGEDKFSKQIARKIEQAREVKPIETTTELAEIIKLVKPAKELKKKGHPAKQIFQAIRIEVNDELGAADESIQQAMDMLALDGRISVITFHSLEDRLTKQLFKEASTVEVPKGLPFIPDDLKPKMELVSRKPILPSAEELEANNRSHSAKLRVARKIHK.

S-adenosyl-L-methionine-binding positions include 35 to 37, Asp-55, Phe-84, Asp-105, and Gln-112; that span reads AGH.

It belongs to the methyltransferase superfamily. RsmH family.

Its subcellular location is the cytoplasm. It catalyses the reaction cytidine(1402) in 16S rRNA + S-adenosyl-L-methionine = N(4)-methylcytidine(1402) in 16S rRNA + S-adenosyl-L-homocysteine + H(+). In terms of biological role, specifically methylates the N4 position of cytidine in position 1402 (C1402) of 16S rRNA. This is Ribosomal RNA small subunit methyltransferase H from Streptococcus pneumoniae (strain 70585).